The sequence spans 295 residues: uncharacterized protein (295 aa).

The signal sequence occupies residues 1–19 (MFKKYIFILILFIASIARA). A disordered region spans residues 275 to 295 (RNNPPLKNNNAKGKNPYDTNK). The span at 276–295 (NNPPLKNNNAKGKNPYDTNK) shows a compositional bias: low complexity.

This is an uncharacterized protein from Rickettsia conorii (strain ATCC VR-613 / Malish 7).